The chain runs to 245 residues: MIIPALDLINGTVVRLHQGDYGKQRDYGNDPLPRLQDYAAQGAEVLHLVDLTGAKDPAKRQIPLIKTLVAGVNVPVQVGGGVRSEEDVAALLEAGVARVVVGSTAVKSPEMVKGWFERFGADALVLALDVRIDEQGNKQVAVSGWQENSGVSLEQLVETYLPVGLKHVLCTDISRDGTLAGSNVSLYEEVCARYPQVAFQSSGGIGDINDVAALRGTGVRGVIVGRALLEGKFTVKEAIACWQNA.

Asp-7 functions as the Proton acceptor in the catalytic mechanism. The active-site Proton donor is Asp-129.

The protein belongs to the HisA/HisF family.

The protein localises to the cytoplasm. The catalysed reaction is 1-(5-phospho-beta-D-ribosyl)-5-[(5-phospho-beta-D-ribosylamino)methylideneamino]imidazole-4-carboxamide = 5-[(5-phospho-1-deoxy-D-ribulos-1-ylimino)methylamino]-1-(5-phospho-beta-D-ribosyl)imidazole-4-carboxamide. It functions in the pathway amino-acid biosynthesis; L-histidine biosynthesis; L-histidine from 5-phospho-alpha-D-ribose 1-diphosphate: step 4/9. The chain is 1-(5-phosphoribosyl)-5-[(5-phosphoribosylamino)methylideneamino] imidazole-4-carboxamide isomerase from Escherichia coli (strain ATCC 8739 / DSM 1576 / NBRC 3972 / NCIMB 8545 / WDCM 00012 / Crooks).